The sequence spans 550 residues: Acetyl-coenzyme A transporter 1 (550 aa).

The Cytoplasmic segment spans residues 1–74; the sequence is MSPTISHKDN…KRSYRAELSS (74 aa). A Phosphoserine modification is found at S42. Residues 75–95 traverse the membrane as a helical segment; that stretch reads ILLLLFLYVLQGIPLGLAGSI. The Extracellular portion of the chain corresponds to 96–113; it reads PLILQSKNVSYTDQAFFS. N103 carries an N-linked (GlcNAc...) asparagine glycan. The helical transmembrane segment at 114–134 threads the bilayer; sequence FVFWPFSLKLLWAPLVDAVYF. The Cytoplasmic segment spans residues 135–141; the sequence is KNFGRRK. Residues 142–162 form a helical membrane-spanning segment; the sequence is SWLVPTQYILGIFMIYLSTQV. Over 163 to 256 the chain is Extracellular; sequence DRLLGNIDGR…FQPQPRGIVT (94 aa). The helical transmembrane segment at 257–277 threads the bilayer; sequence LSDFLFFWGTVFLITTTLVAL. The Cytoplasmic segment spans residues 278 to 300; the sequence is LKKETREASVVKEETQGITDTYK. The chain crosses the membrane as a helical span at residues 301 to 321; it reads LLFSIIKMPAVLAFCLLILTS. The Extracellular portion of the chain corresponds to 322–344; it reads KIGFSAADAVTGLKLVEEGVPKE. The helical transmembrane segment at 345 to 365 threads the bilayer; the sequence is HLALLAVPMVPLQIILPLLIS. Over 366–375 the chain is Cytoplasmic; sequence KYTAGPQPLN. Residues 376-396 form a helical membrane-spanning segment; sequence IFYKAMPYRLLLGLEYALLVW. Topologically, residues 397–405 are extracellular; sequence WTPKVEHQG. The helical transmembrane segment at 406–426 threads the bilayer; that stretch reads GFPIYYYIIVLLSYALHQVTL. Over 427–509 the chain is Cytoplasmic; the sequence is YSMYVSIMAF…LGGSCVTALD (83 aa). The chain crosses the membrane as a helical span at residues 510 to 530; that stretch reads GYYVESIVCVLIGFGWWFFLG. The Extracellular portion of the chain corresponds to 531–550; the sequence is PKFKKLQDEGPSSWKCKRTN.

It belongs to the SLC33A transporter family. In terms of assembly, homodimerizes. In terms of tissue distribution, expressed in brain at all developmental stages. Detected in hippocampus, hypothalamus, cerebellum, cortex, olfactory bulb, and the ventral and dorsal anterior olfactory nucleus.

The protein localises to the endoplasmic reticulum membrane. The enzyme catalyses acetyl-CoA(in) = acetyl-CoA(out). Its function is as follows. Acetyl-CoA transporter that mediates active acetyl-CoA import through the endoplasmic reticulum (ER) membrane into the ER lumen where specific ER-based acetyl-CoA:lysine acetyltransferases are responsible for the acetylation of ER-based protein substrates, such as BACE1. Necessary for O-acetylation of gangliosides. The polypeptide is Acetyl-coenzyme A transporter 1 (Slc33a1) (Rattus norvegicus (Rat)).